A 209-amino-acid polypeptide reads, in one-letter code: Kynurenine formamidase (209 aa).

Trp-20 serves as a coordination point for substrate. 3 residues coordinate Zn(2+): His-50, His-54, and Asp-56. His-60 acts as the Proton donor/acceptor in catalysis. His-161 and Glu-173 together coordinate Zn(2+).

It belongs to the Cyclase 1 superfamily. KynB family. Homodimer. Requires Zn(2+) as cofactor.

The catalysed reaction is N-formyl-L-kynurenine + H2O = L-kynurenine + formate + H(+). It participates in amino-acid degradation; L-tryptophan degradation via kynurenine pathway; L-kynurenine from L-tryptophan: step 2/2. Functionally, catalyzes the hydrolysis of N-formyl-L-kynurenine to L-kynurenine, the second step in the kynurenine pathway of tryptophan degradation. The sequence is that of Kynurenine formamidase from Bacillus mycoides (strain KBAB4) (Bacillus weihenstephanensis).